The sequence spans 130 residues: Large ribosomal subunit protein bL19 (130 aa).

This sequence belongs to the bacterial ribosomal protein bL19 family.

Functionally, this protein is located at the 30S-50S ribosomal subunit interface and may play a role in the structure and function of the aminoacyl-tRNA binding site. The chain is Large ribosomal subunit protein bL19 from Methylorubrum populi (strain ATCC BAA-705 / NCIMB 13946 / BJ001) (Methylobacterium populi).